The primary structure comprises 564 residues: Septin-9 (564 aa).

Met1 carries the N-acetylmethionine modification. Ser12 carries the post-translational modification Phosphoserine. Phosphothreonine is present on residues Thr24 and Thr31. 2 disordered regions span residues 38–165 and 178–224; these read VASS…PVTD and PAEA…DSEV. The residue at position 44 (Lys44) is an N6-acetyllysine. Ser64, Ser67, and Ser71 each carry phosphoserine. Positions 95 to 109 are enriched in polar residues; it reads DISSKQVESTASTPG. Positions 116–134 are enriched in basic and acidic residues; sequence KRAEVLGHKTPEPVPRRTE. Thr125 is modified (phosphothreonine). Residues 190–203 are compositionally biased toward polar residues; that stretch reads TLENSEAPMSQLQS. Tyr258 is subject to Phosphotyrosine. The 272-residue stretch at 275 to 546 folds into the Septin-type G domain; that stretch reads QGFEFNIMVV…EAYRVKRLNE (272 aa). The tract at residues 285 to 292 is G1 motif; it reads GQSGLGKS. 285–292 is a GTP binding site; sequence GQSGLGKS. A phosphoserine mark is found at Ser307 and Ser312. GTP is bound by residues Thr319, Gly345, 425-433, Gly480, and Arg495; that span reads KADTLTLEE. The tract at residues 342 to 345 is G3 motif; it reads DTPG. The tract at residues 424–427 is G4 motif; it reads AKAD.

It belongs to the TRAFAC class TrmE-Era-EngA-EngB-Septin-like GTPase superfamily. Septin GTPase family. As to quaternary structure, septins polymerize into heterooligomeric protein complexes that form filaments, and associate with cellular membranes, actin filaments, and microtubules. GTPase activity is required for filament formation. Interacts with SEPTIN2, SEPTIN6, SEPTIN7, SEPTIN11 and SEPTIN14. Interacts with RTKN and ARHGEF18. Expressed in the brain, mainly in the perikarya and processes of astrocytes in the cerebellum, dentate gyrus and corpus callosum (at protein level). In the sciatic nerve, highly expressed in Schwann cells (at protein level). Isoforms are differentially expressed in testes, kidney, liver, heart, spleen and brain. Undetectable in skeletal muscle.

It is found in the cytoplasm. Its subcellular location is the cytoskeleton. Its function is as follows. Filament-forming cytoskeletal GTPase. May play a role in cytokinesis (Potential). The chain is Septin-9 from Rattus norvegicus (Rat).